The sequence spans 421 residues: Esterase LipQ (421 aa).

Active-site residues include Ser-249, Asp-344, and His-377.

Belongs to the 'GDXG' lipolytic enzyme family.

It catalyses the reaction hexadecanoate ester + H2O = an aliphatic alcohol + hexadecanoate + H(+). Functionally, shows lipase activity. Is highly immunogenic and may play an important role in the virulence and pathogenesis of M.tuberculosis infection, by altering the balance of cytokines. Significantly down-regulates the expression level of pro-inflammatory cytokines (TNF-alpha and IFN-gamma) and up-regulates the level of anti-inflammatory cytokines such as IL-4 and IL-10 as compared to LPS stimulated macrophages. Also inhibits the expression of iNOS, TLR2 and transcription factor NF-kappa-B in LPS stimulated macrophages whereas the expression of TLR-4 remains unchanged. In Mycobacterium tuberculosis (strain ATCC 25618 / H37Rv), this protein is Esterase LipQ.